The following is an 806-amino-acid chain: Leucine--tRNA ligase (806 aa).

Positions 40–51 match the 'HIGH' region motif; sequence PYPSGTGLHVGH. Residues 576 to 580 carry the 'KMSKS' region motif; sequence KMSKS. Position 579 (Lys579) interacts with ATP.

Belongs to the class-I aminoacyl-tRNA synthetase family.

It localises to the cytoplasm. It catalyses the reaction tRNA(Leu) + L-leucine + ATP = L-leucyl-tRNA(Leu) + AMP + diphosphate. This Prosthecochloris aestuarii (strain DSM 271 / SK 413) protein is Leucine--tRNA ligase.